The following is a 76-amino-acid chain: Esculentin-2MT1 (76 aa).

The first 22 residues, 1–22, serve as a signal peptide directing secretion; the sequence is MFTMKKPLLLLFFLGTISLSLC. Residues 23-37 constitute a propeptide that is removed on maturation; the sequence is EEERNADEDDGEKEV. Cysteines 70 and 76 form a disulfide.

It belongs to the frog skin active peptide (FSAP) family. Esculentin subfamily. In terms of tissue distribution, expressed by the skin glands.

The protein localises to the secreted. Its function is as follows. Antimicrobial peptide. The chain is Esculentin-2MT1 from Amolops mantzorum (Sichuan torrent frog).